The primary structure comprises 173 residues: Telomerase RNA component interacting RNase (173 aa).

The span at 1-12 (MAARGRRAEPPG) shows a compositional bias: basic and acidic residues. The interval 1-119 (MAARGRRAEP…LSFVGKRRGG (119 aa)) is disordered. 2 stretches are compositionally biased toward low complexity: residues 14 to 23 (EAPGPAGSGR) and 43 to 52 (SGSSPVSSGV). A compositionally biased stretch (basic and acidic residues) spans 64-79 (LFKRKMEEEQRQRQEE). Residues 80–90 (PPPGPQRPDPP) show a composition bias toward pro residues. At K143 the chain carries N6-acetyllysine.

Part of the telomerase RNA 3' end complex which contains about 488 proteins.

In terms of biological role, exoribonuclease that is part of the telomerase RNA 3' end processing complex and which has the ability to cleave all four unpaired RNA nucleotides from the 5' end or 3' end with higher efficiency for purine bases. The chain is Telomerase RNA component interacting RNase from Mus musculus (Mouse).